The primary structure comprises 63 residues: Large ribosomal subunit protein uL29 (63 aa).

Belongs to the universal ribosomal protein uL29 family.

This is Large ribosomal subunit protein uL29 from Shigella dysenteriae serotype 1 (strain Sd197).